The sequence spans 1105 residues: Mediator of RNA polymerase II transcription subunit 14 (1105 aa).

The disordered stretch occupies residues Ala28 to Pro48.

Belongs to the Mediator complex subunit 14 family. Component of the Mediator complex.

It localises to the nucleus. In terms of biological role, component of the Mediator complex, a coactivator involved in the regulated transcription of nearly all RNA polymerase II-dependent genes. Mediator functions as a bridge to convey information from gene-specific regulatory proteins to the basal RNA polymerase II transcription machinery. Mediator is recruited to promoters by direct interactions with regulatory proteins and serves as a scaffold for the assembly of a functional preinitiation complex with RNA polymerase II and the general transcription factors. This chain is Mediator of RNA polymerase II transcription subunit 14 (RGR1), found in Coccidioides immitis (strain RS) (Valley fever fungus).